Reading from the N-terminus, the 357-residue chain is Membrane-bound lytic murein transglycosylase C (357 aa).

The signal sequence occupies residues 1 to 16; sequence MKKMLALLVIAPLLVS. Residue Cys-17 is the site of N-palmitoyl cysteine attachment. Cys-17 is lipidated: S-diacylglycerol cysteine.

The protein belongs to the transglycosylase Slt family.

The protein localises to the cell outer membrane. The enzyme catalyses Exolytic cleavage of the (1-&gt;4)-beta-glycosidic linkage between N-acetylmuramic acid (MurNAc) and N-acetylglucosamine (GlcNAc) residues in peptidoglycan, from either the reducing or the non-reducing ends of the peptidoglycan chains, with concomitant formation of a 1,6-anhydrobond in the MurNAc residue.. Its function is as follows. Murein-degrading enzyme. May play a role in recycling of muropeptides during cell elongation and/or cell division. In Pectobacterium atrosepticum (strain SCRI 1043 / ATCC BAA-672) (Erwinia carotovora subsp. atroseptica), this protein is Membrane-bound lytic murein transglycosylase C.